The sequence spans 128 residues: MTSRAIIPPGSGVPLAPYSPGMQADNVIYVSGTLPFDKDNNVVHLGDAACQTRHVLEIIKGVLEAAGSGMADVTFNHIFLTDWANYGAINAVYAEYFPGEKPARYCVQVGLVKPGALVEIATIAHKRA.

It belongs to the RutC family.

The catalysed reaction is (Z)-3-aminoacrylate + H2O + H(+) = 3-oxopropanoate + NH4(+). Involved in pyrimidine catabolism. Catalyzes the deamination of 3-aminoacrylate to malonic semialdehyde, a reaction that can also occur spontaneously. RutC may facilitate the reaction and modulate the metabolic fitness, rather than catalyzing essential functions. This is 3-aminoacrylate deaminase RutC from Azorhizobium caulinodans (strain ATCC 43989 / DSM 5975 / JCM 20966 / LMG 6465 / NBRC 14845 / NCIMB 13405 / ORS 571).